The following is a 310-amino-acid chain: Cytosolic Fe-S cluster assembly factor Nubp1 homolog (310 aa).

Residues C9, C23, C26, and C32 each contribute to the [4Fe-4S] cluster site. An ATP-binding site is contributed by G63–S70. Residues C240 and C243 each contribute to the [4Fe-4S] cluster site.

This sequence belongs to the Mrp/NBP35 ATP-binding proteins family. NUBP1/NBP35 subfamily. Heterotetramer of 2 Nubp1 and 2 Nubp2 chains. The cofactor is [4Fe-4S] cluster.

The protein localises to the cytoplasm. In terms of biological role, component of the cytosolic iron-sulfur (Fe/S) protein assembly (CIA) machinery. Required for maturation of extramitochondrial Fe-S proteins. The Nubp1-Nubp2 heterotetramer forms a Fe-S scaffold complex, mediating the de novo assembly of an Fe-S cluster and its transfer to target apoproteins. The protein is Cytosolic Fe-S cluster assembly factor Nubp1 homolog of Drosophila mojavensis (Fruit fly).